Here is a 26-residue protein sequence, read N- to C-terminus: Small toxic protein ShoB (26 aa).

Residues 7–24 (LIKRVIKIIIAVLQLILL) traverse the membrane as a helical segment.

It localises to the membrane. Functionally, toxic component of a type I toxin-antitoxin (TA) system. May be a toxic protein; overexpression causes cessation of growth and rapid membrane depolarization. Overexpression induces stress-response and a number of membrane protein genes. The polypeptide is Small toxic protein ShoB (shoB) (Escherichia coli (strain K12)).